The following is a 329-amino-acid chain: Phosphatidylcholine:ceramide cholinephosphotransferase 3 (329 aa).

The Cytoplasmic segment spans residues 1-26; sequence MAVPPVEMYSGSFWNRMRKPLPLRTQ. The chain crosses the membrane as a helical span at residues 27–47; it reads VIRFTVVFVIVSFILAVALQI. Over 48 to 74 the chain is Extracellular; sequence THERMPDPKVTKPLPDLGFELLTKVPG. A helical transmembrane segment spans residues 75–95; it reads MYVLADCCIGFLNILSVFTAF. At 96–147 the chain is on the cytoplasmic side; the sequence is KLYLLHRHCVGSGEPELPCNIPGVSRFFLSVWLCKENCRIELRNIHTIAWIR. Residues 148-168 traverse the membrane as a helical segment; sequence FITSYALLLLFRSAVIVMTSL. Residues 169-211 are Extracellular-facing; sequence PAPDDLCQNPPKIENPVKNVILTVLTAGAGSIHCGDLMYSGHT. The helical transmembrane segment at 212–232 threads the bilayer; that stretch reads VILTLHLMFHWIYGAMVHWSF. Position 233 (Arg233) is a topological domain, cytoplasmic. The helical transmembrane segment at 234-254 threads the bilayer; sequence PVVTVVAIFGYYCIVASRFHY. The Extracellular segment spans residues 255-257; that stretch reads TDD. A helical membrane pass occupies residues 258–278; sequence VLVAIYLTIATFIAVGHNADG. The Cytoplasmic segment spans residues 279–329; it reads APWQLQLFIRWWPCCGANSREVTEDSQPVMVAFKSEAAGQSSRKVVDERNH.

This sequence belongs to the sphingomyelin synthase family.

It localises to the membrane. It carries out the reaction an N-acylsphing-4-enine + a 1,2-diacyl-sn-glycero-3-phosphocholine = a sphingomyelin + a 1,2-diacyl-sn-glycerol. The enzyme catalyses an N-acylsphinganine + a 1,2-diacyl-sn-glycero-3-phosphocholine = an N-acylsphinganine-1-phosphocholine + a 1,2-diacyl-sn-glycerol. The catalysed reaction is an N-acylsphing-4-enine + a 1,2-diacyl-sn-glycero-3-phosphoethanolamine = an N-acylsphing-4-enine 1-phosphoethanolamine + a 1,2-diacyl-sn-glycerol. It catalyses the reaction an N-acylsphinganine + a 1,2-diacyl-sn-glycero-3-phosphoethanolamine = an N-acylsphinganine-1-phosphoethanolamine + a 1,2-diacyl-sn-glycerol. Bifunctional sphingomyelin (SM)/ethanolamine phosphorylceramide (EPC) synthase with minimal inositol phosphorylceramide (IPC) synthase activity. Specificity is likely to be defined by residues in the lumenal catalytic domain that interact with the polar head groups of the phospholipid donors. SM is synthesized by both stages of the parasite life cycle, bloodstream forms (BSF) and procyclic forms (PCF), by transferring the phosphocholine from a 1,2-diacyl-sn-glycero-3-phosphocholine to an N-acylsphing-4-enine (ceramide) or an N-acylsphinganine (dihydroceramide). Similarly, EPC is synthesized by transferring phosphoethanolamine from a 1,2-diacyl-sn-glycero-3-phosphoethanolamine to ceramide or dihydroceramide by BSF and PCF, while IPC is confined to PCF. The ceramide/dihydroceramide ratios are skewed towards dihydroceramide in PCF parasites and ceramide in BSF parasites, this is likely due to differential expression and/or regulation of dihydroceramide desaturase, the enzyme responsible for converting dihydroceramide to ceramide. This Trypanosoma brucei brucei protein is Phosphatidylcholine:ceramide cholinephosphotransferase 3.